The primary structure comprises 1029 residues: MTLDYEIYKEGGILNNRYQKIEDISEGSYGYVSLAKDVREKRLVAVKYIFKLEDDGQYDGPQDDENDCDSSDCDDDEDTKVDTDRHENENGNASSNNGSSREKKHNLYKHKKSLISSKVKSRLSNNICLEAMYEVDIQTKIGRHQNIAALLDFFDSYIIMEYCSGGDLYEAIKADAVPKKTKSITHIITQIMDAIEYVHNKGIYHRDIKPENILISGIDWTIKLTDWGLATTDKTSMDRNVGSERYMSPELFDSNLDIKERKEPYDCAKVDLWAMGIVFLNIVFHKNPFSIANQSDKSFCYFAANREALFDVFSTMAYDFFQVLRYSLTIDPANRDLKMMRTELQNLSEYTLDDEYYNNLDEGYEETMIDGLPPQPVPPSSAPVSLPTPISSSNKQHMPEFKKDFNFNNVNERKRSDVSQNQNVASGFFKKPSTQQQKFFNQGYNTTLSTHERAKSAPKFKFKKRNKYGRTDNQFSKPVNIEDRKKSKILKKSRKPLGIPTPNTHMNNFFHDYKARDEFNTRDFFTPPSVQHRYMEGFSNNNNKQYRQNRNYNNNNNNSNNNHGSNYNNFNNGNSYIKGWNKNFNKYRRPSSSSYTGKSPLSRYNMSYNHNNNSSINGYARRGSTTTVQHSPGAYIPPNARNHHVSPTNQFLRVPQSTAPDISTVLGGKPSYQEHYTQDSMDSEGDHDSDDVLFTLEEGDHDFVNGMDNLSINDHLPHTTVGSHNEVFVHASTNHNNNGNNNHIDTNSTTNQYHRQYIPPPLTTSLHINNNNNESNELPDLLKSPASSEAHLNLSSGPIDPILTGNIGNRYSHSSDSKELEQERRLSMEQKFKNGVYVPPHHRKSFNLGTQVPPMNMKTSNEATLSVSHNSVNFGGSYNSRRSSANESNPLHMNKALEKLSSSPGAKSSFVGFPKPLLPRNHSSTTIALQNEDVFADSNNDAIIFEDEEYEGESDKMAHGKMEGGDNESSSTSPDERQIFGPYEIYAQTFAGSTHDKKLGAGRKTSIQDEMVGSLEQYKNNWLILQQQD.

Residues 18 to 351 enclose the Protein kinase domain; that stretch reads YQKIEDISEG…TELQNLSEYT (334 aa). Residues 27-35 and lysine 47 each bind ATP; that span reads GSYGYVSLA. The span at 56-79 shows a compositional bias: acidic residues; the sequence is GQYDGPQDDENDCDSSDCDDDEDT. Positions 56–105 are disordered; sequence GQYDGPQDDENDCDSSDCDDDEDTKVDTDRHENENGNASSNNGSSREKKH. Residues 80–89 are compositionally biased toward basic and acidic residues; that stretch reads KVDTDRHENE. Residues 90–99 show a composition bias toward low complexity; sequence NGNASSNNGS. The Proton acceptor role is filled by aspartate 207. Residues 377–397 form a disordered region; that stretch reads VPPSSAPVSLPTPISSSNKQH. A phosphoserine mark is found at serine 416 and serine 419. Phosphothreonine occurs at positions 501, 504, and 526. Residue serine 529 is modified to Phosphoserine. The interval 532–570 is disordered; it reads HRYMEGFSNNNNKQYRQNRNYNNNNNNSNNNHGSNYNNF. The segment covering 538 to 570 has biased composition (low complexity); sequence FSNNNNKQYRQNRNYNNNNNNSNNNHGSNYNNF. Serine 646 carries the post-translational modification Phosphoserine. The interval 732–824 is disordered; the sequence is STNHNNNGNN…SDSKELEQER (93 aa). Residues 734 to 743 are compositionally biased toward low complexity; sequence NHNNNGNNNH. The span at 744 to 754 shows a compositional bias: polar residues; sequence IDTNSTTNQYH. Basic and acidic residues predominate over residues 813 to 824; sequence HSSDSKELEQER. Phosphoserine occurs at positions 845 and 884. Residues 949-978 are disordered; it reads EYEGESDKMAHGKMEGGDNESSSTSPDERQ. The span at 953–964 shows a compositional bias: basic and acidic residues; sequence ESDKMAHGKMEG. Threonine 1005 carries the phosphothreonine modification. Serine 1014 carries the post-translational modification Phosphoserine.

The protein belongs to the protein kinase superfamily. Ser/Thr protein kinase family. CK2 subfamily. Phosphorylated by PKA in a TORC1-dependent manner. Phosphorylation at PKA consensus sites RRxS/T decreases upon rapamycin treatment.

The protein localises to the nucleus. It carries out the reaction L-seryl-[protein] + ATP = O-phospho-L-seryl-[protein] + ADP + H(+). The catalysed reaction is L-threonyl-[protein] + ATP = O-phospho-L-threonyl-[protein] + ADP + H(+). In terms of biological role, may act on PRP20. The chain is Serine/threonine-protein kinase KSP1 (KSP1) from Saccharomyces cerevisiae (strain ATCC 204508 / S288c) (Baker's yeast).